The primary structure comprises 464 residues: MDNGMLSRFIMTKTLLVFCISMTLSSHFGFSQMPTSSVQDETNDNITIFTRILDGLLDGYDNRLRPGLGERITQVRTDIYVTSFGPVSDTEMEYTIDVFFRQSWKDERLRFKGPMQRLPLNNLLASKIWTPDTFFHNGKKSIAHNMTTPNKLLRLEDDGTLLYTMRLTISAECPMQLEDFPMDAHACPLKFGSYAYPNSEVVYVWTNGSTKSVVVAEDGSRLNQYHLMGQTVGTENISTSTGEYTIMTAHFHLKRKIGYFVIQTYLPCIMTVILSQVSFWLNRESVPARTVFGVTTVLTMTTLSISARNSLPKVAYATAMDWFIAVCYAFVFSALIEFATVNYFTKRGWAWDGKKALEAAKIKKKERELILNKSTNAFTTGKLTHPPNIPKEQLPGGTGNAVGTASIRASEEKTSESKKTYNSISKIDKMSRIVFPILFGTFNLVYWATYLNREPVIKGATSPK.

An N-terminal signal peptide occupies residues 1–25 (MDNGMLSRFIMTKTLLVFCISMTLS). The Extracellular segment spans residues 26 to 260 (SHFGFSQMPT…FHLKRKIGYF (235 aa)). Residue Asn45 is glycosylated (N-linked (GlcNAc...) asparagine). Residue Arg101 participates in 4-aminobutanoate binding. A glycan (N-linked (GlcNAc...) asparagine) is linked at Asn145. 4-aminobutanoate is bound at residue Thr164. Residues Cys173 and Cys187 are joined by a disulfide bond. 2 N-linked (GlcNAc...) asparagine glycosylation sites follow: Asn207 and Asn236. The next 3 helical transmembrane spans lie at 261–281 (VIQTYLPCIMTVILSQVSFWL), 287–308 (PARTVFGVTTVLTMTTLSISAR), and 319–340 (AMDWFIAVCYAFVFSALIEFAT). Residues 341-429 (VNYFTKRGWA…TYNSISKIDK (89 aa)) are Cytoplasmic-facing. Residue Lys355 forms a Glycyl lysine isopeptide (Lys-Gly) (interchain with G-Cter in ubiquitin) linkage. The tract at residues 382–414 (KLTHPPNIPKEQLPGGTGNAVGTASIRASEEKT) is disordered. Residues 430–450 (MSRIVFPILFGTFNLVYWATY) form a helical membrane-spanning segment.

The protein belongs to the ligand-gated ion channel (TC 1.A.9) family. Gamma-aminobutyric acid receptor (TC 1.A.9.5) subfamily. GABRA5 sub-subfamily. As to quaternary structure, heteropentamer, formed by a combination of alpha (GABRA1-6), beta (GABRB1-3), gamma (GABRG1-3), delta (GABRD), epsilon (GABRE), rho (GABRR1-3), pi (GABRP) and theta (GABRQ) chains, each subunit exhibiting distinct physiological and pharmacological properties. Expressed in brain areas such as cerebral cortex, hippocampal formation and olfactory bulb granular layer.

The protein localises to the postsynaptic cell membrane. It is found in the cell membrane. It carries out the reaction chloride(in) = chloride(out). Allosterically potentiated by alphaxalone. Allosterically inhibited by pregnenolone sulfate. Inhibited by zinc and lanthanum. Functionally, alpha subunit of the heteropentameric ligand-gated chloride channel gated by gamma-aminobutyric acid (GABA), a major inhibitory neurotransmitter in the brain. GABA-gated chloride channels, also named GABA(A) receptors (GABAAR), consist of five subunits arranged around a central pore and contain GABA active binding site(s) located at the alpha and beta subunit interface(s). When activated by GABA, GABAARs selectively allow the flow of chloride anions across the cell membrane down their electrochemical gradient. GABAARs containing alpha-5/GABRA5 subunits are mainly extrasynaptic and contribute to the tonic GABAergic inhibition in the hippocampus. Extrasynaptic alpha-5-containing GABAARs in CA1 pyramidal neurons play a role in learning and memory processes. The sequence is that of Gamma-aminobutyric acid receptor subunit alpha-5 from Rattus norvegicus (Rat).